We begin with the raw amino-acid sequence, 303 residues long: Trans-aconitate 2-methyltransferase (303 aa).

The tract at residues 271 to 303 (EGSGGSGGSGGSAGSAGCAGSGGSVGPAGEAGR) is disordered. Over residues 272–303 (GSGGSGGSGGSAGSAGCAGSGGSVGPAGEAGR) the composition is skewed to gly residues.

It belongs to the methyltransferase superfamily. Tam family.

The protein resides in the cytoplasm. The catalysed reaction is trans-aconitate + S-adenosyl-L-methionine = (E)-3-(methoxycarbonyl)pent-2-enedioate + S-adenosyl-L-homocysteine. Its function is as follows. Catalyzes the S-adenosylmethionine monomethyl esterification of trans-aconitate. The chain is Trans-aconitate 2-methyltransferase from Streptomyces coelicolor (strain ATCC BAA-471 / A3(2) / M145).